The primary structure comprises 458 residues: (R)-6-hydroxynicotine oxidase (458 aa).

In terms of domain architecture, FAD-binding PCMH-type spans 33-204 (RHLQRPSLIA…TEVEVQLYEL (172 aa)). FAD is bound by residues 67–73 (RSGGHNP), 129–130 (HP), 134–137 (FCGL), Gly-144, Thr-195, Asn-413, and Asn-450. Position 71 is a pros-8alpha-FAD histidine (His-71).

It belongs to the oxygen-dependent FAD-linked oxidoreductase family. In terms of assembly, monomer. Requires FAD as cofactor.

Its subcellular location is the cytoplasm. The catalysed reaction is (R)-6-hydroxynicotine + O2 + H2O = 6-hydroxypseudooxynicotine + H2O2. It carries out the reaction (R)-6-hydroxynicotine + O2 = 6-hydroxy-N-methylmyosmine + H2O2. It functions in the pathway alkaloid degradation; nicotine degradation; 6-hydroxypseudooxynicotine from nicotine (R-isomer route): step 2/2. Inhibited by (S)-6-hydroxynicotine. Inhibited by high concentrations of phenanthroline. In terms of biological role, involved in the degradation of D-nicotine. Catalyzes the oxidation of (R)-6-hydroxynicotine (6-hydroxy-D-nicotine) to 6-hydroxypseudooxynicotine. Oxidation of the pyrrolidine ring of (R)-6-hydroxynicotine leads to the formation of the optically inactive 6-hydroxy-N-methylmyosmine, which hydrolyzes spontaneously to 6-hydroxypseudooxynicotine. Acts with absolute stereospecificity on the D-form of 6-hydroxynicotine. Shows lower activity with (R)-6-hydroxynornicotine, and weak activity with (R)-4-(1-methylpyrrolidine-2-yl)phenol, (R)-6-chloronicotine and (R)-nicotine. In Paenarthrobacter nicotinovorans (Arthrobacter nicotinovorans), this protein is (R)-6-hydroxynicotine oxidase.